The following is a 55-amino-acid chain: Accessory gland-specific peptide 70A (55 aa).

A signal peptide spans 1-19; it reads MKTLSVFLVLVCLLGLVQS. Residues Pro-28, Pro-32, Pro-34, and Pro-38 each carry the hydroxyproline modification. Residues Cys-43 and Cys-55 are joined by a disulfide bond.

As to expression, main cells of the accessory glands of males (paragonial gland).

The protein resides in the secreted. In terms of biological role, represses female sexual receptivity and stimulates oviposition. The protein is Accessory gland-specific peptide 70A (Acp70A) of Drosophila sechellia (Fruit fly).